The primary structure comprises 419 residues: Enolase (419 aa).

Q161 contributes to the (2R)-2-phosphoglycerate binding site. The Proton donor role is filled by E205. Mg(2+) is bound by residues D240, E283, and D309. Positions 334, 363, 364, and 385 each coordinate (2R)-2-phosphoglycerate. K334 acts as the Proton acceptor in catalysis.

Belongs to the enolase family. Mg(2+) is required as a cofactor.

It is found in the cytoplasm. The protein resides in the secreted. Its subcellular location is the cell surface. The enzyme catalyses (2R)-2-phosphoglycerate = phosphoenolpyruvate + H2O. It participates in carbohydrate degradation; glycolysis; pyruvate from D-glyceraldehyde 3-phosphate: step 4/5. Its function is as follows. Catalyzes the reversible conversion of 2-phosphoglycerate (2-PG) into phosphoenolpyruvate (PEP). It is essential for the degradation of carbohydrates via glycolysis. The chain is Enolase from Saccharolobus islandicus (strain L.S.2.15 / Lassen #1) (Sulfolobus islandicus).